We begin with the raw amino-acid sequence, 423 residues long: p-aminobenzoyl-glutamate hydrolase subunit A homolog (423 aa).

The protein belongs to the peptidase M20 family. It depends on Mn(2+) as a cofactor.

Functionally, catalyzes the cleavage of p-aminobenzoyl-glutamate (PABA-GLU) to form p-aminobenzoate (PABA) and glutamate. This is p-aminobenzoyl-glutamate hydrolase subunit A homolog (abgA) from Haemophilus influenzae (strain ATCC 51907 / DSM 11121 / KW20 / Rd).